A 196-amino-acid polypeptide reads, in one-letter code: ATP-dependent Clp protease proteolytic subunit (196 aa).

The active-site Nucleophile is the Ser96. His121 is an active-site residue.

The protein belongs to the peptidase S14 family. As to quaternary structure, fourteen ClpP subunits assemble into 2 heptameric rings which stack back to back to give a disk-like structure with a central cavity, resembling the structure of eukaryotic proteasomes.

It localises to the cytoplasm. The catalysed reaction is Hydrolysis of proteins to small peptides in the presence of ATP and magnesium. alpha-casein is the usual test substrate. In the absence of ATP, only oligopeptides shorter than five residues are hydrolyzed (such as succinyl-Leu-Tyr-|-NHMec, and Leu-Tyr-Leu-|-Tyr-Trp, in which cleavage of the -Tyr-|-Leu- and -Tyr-|-Trp bonds also occurs).. Cleaves peptides in various proteins in a process that requires ATP hydrolysis. Has a chymotrypsin-like activity. Plays a major role in the degradation of misfolded proteins. The chain is ATP-dependent Clp protease proteolytic subunit from Streptococcus equi subsp. zooepidemicus (strain H70).